The chain runs to 415 residues: Dynein assembly factor with WD repeat domains 1 (415 aa).

8 WD repeats span residues 90-129 (AHIL…ELNT), 132-174 (GHRN…HTFR), 175-214 (GHTA…EVCT), 217-256 (GHSA…KVNI), 259-298 (GHCA…CVAT), 301-340 (GHDD…CIAK), 343-384 (GHEG…QVLE), and 386-415 (HTDE…RIWR).

This sequence belongs to the WD repeat WDR69 family. In terms of assembly, interacts with IFT46.

Its subcellular location is the cytoplasm. It is found in the cytoskeleton. The protein resides in the flagellum basal body. It localises to the flagellum axoneme. Its function is as follows. Required for axonemal dynein assembly and ciliary motility in ciliated organs, including Kupffer's vesicle, during embryogenesis. Facilitates the onset of robust cilia motility during development. This is Dynein assembly factor with WD repeat domains 1 (DAW1) from Macaca fascicularis (Crab-eating macaque).